The sequence spans 40 residues: Adenylate kinase (40 aa).

Residue 10–15 (GAGKGT) participates in ATP binding. The segment at 30 to 40 (STGDMFIKAIK) is NMP. An AMP-binding site is contributed by Thr31.

This sequence belongs to the adenylate kinase family. As to quaternary structure, monomer.

Its subcellular location is the cytoplasm. It carries out the reaction AMP + ATP = 2 ADP. It participates in purine metabolism; AMP biosynthesis via salvage pathway; AMP from ADP: step 1/1. Functionally, catalyzes the reversible transfer of the terminal phosphate group between ATP and AMP. Plays an important role in cellular energy homeostasis and in adenine nucleotide metabolism. This chain is Adenylate kinase (adk), found in Staphylococcus carnosus.